Reading from the N-terminus, the 237-residue chain is Ribonuclease PH (237 aa).

Phosphate-binding positions include R86 and 124-126 (GTR).

It belongs to the RNase PH family. As to quaternary structure, homohexameric ring arranged as a trimer of dimers.

It carries out the reaction tRNA(n+1) + phosphate = tRNA(n) + a ribonucleoside 5'-diphosphate. Phosphorolytic 3'-5' exoribonuclease that plays an important role in tRNA 3'-end maturation. Removes nucleotide residues following the 3'-CCA terminus of tRNAs; can also add nucleotides to the ends of RNA molecules by using nucleoside diphosphates as substrates, but this may not be physiologically important. Probably plays a role in initiation of 16S rRNA degradation (leading to ribosome degradation) during starvation. The sequence is that of Ribonuclease PH from Cereibacter sphaeroides (strain ATCC 17029 / ATH 2.4.9) (Rhodobacter sphaeroides).